A 251-amino-acid polypeptide reads, in one-letter code: Regulator of G-protein signaling 9-binding protein C (251 aa).

Over 1–230 (MPLQNVKVAD…NSKGCCSDGQ (230 aa)) the chain is Cytoplasmic. 2 coiled-coil regions span residues 53-94 (LRDE…ELER) and 158-187 (ANKA…MKVN). A helical; Anchor for type IV membrane protein transmembrane segment spans residues 231–250 (LIVSLLLCGTALVAITLYSI). Position 251 (Leu-251) is a topological domain, extracellular.

It belongs to the RGS7BP/RGS9BP family.

It is found in the membrane. Regulator of G protein-coupled receptor (GPCR) signaling. Probably acts by regulating the activity of some 'R7' family protein (RGS6, RGS7, RGS9 and/or RGS11). This chain is Regulator of G-protein signaling 9-binding protein C (rgs9bp-c), found in Xenopus laevis (African clawed frog).